Consider the following 262-residue polypeptide: Hydroxyethylthiazole kinase (262 aa).

Met44 is a substrate binding site. ATP is bound by residues Arg118 and Thr166. A substrate-binding site is contributed by Gly193.

It belongs to the Thz kinase family. Requires Mg(2+) as cofactor.

The catalysed reaction is 5-(2-hydroxyethyl)-4-methylthiazole + ATP = 4-methyl-5-(2-phosphooxyethyl)-thiazole + ADP + H(+). The protein operates within cofactor biosynthesis; thiamine diphosphate biosynthesis; 4-methyl-5-(2-phosphoethyl)-thiazole from 5-(2-hydroxyethyl)-4-methylthiazole: step 1/1. In terms of biological role, catalyzes the phosphorylation of the hydroxyl group of 4-methyl-5-beta-hydroxyethylthiazole (THZ). The protein is Hydroxyethylthiazole kinase of Chlamydia felis (strain Fe/C-56) (Chlamydophila felis).